A 130-amino-acid polypeptide reads, in one-letter code: Small ribosomal subunit protein uS9 (130 aa).

Belongs to the universal ribosomal protein uS9 family.

In Halorhodospira halophila (strain DSM 244 / SL1) (Ectothiorhodospira halophila (strain DSM 244 / SL1)), this protein is Small ribosomal subunit protein uS9.